The primary structure comprises 370 residues: Ubiquitin carboxyl-terminal hydrolase 12 (370 aa).

A Required for plasma membrane localization of USP12/WDR20 motif is present at residues 1–4 (MEIL). A USP domain is found at 39–369 (FGLVNFGNTC…SGYILFYQSR (331 aa)). C48 serves as the catalytic Nucleophile. Residues 146–157 (QEKQNGRLRNGD) show a composition bias toward basic and acidic residues. The interval 146–168 (QEKQNGRLRNGDVDSEDNNSTPD) is disordered. Zn(2+)-binding residues include C186, C189, C233, and C236. H317 functions as the Proton acceptor in the catalytic mechanism.

It belongs to the peptidase C19 family. USP12/USP46 subfamily. Interacts with WDR48. Interacts with WDR20; this interaction promotes translocation of the USP12 complex to the plasma membrane. Component of the USP12-WDR20-WDR48 deubiquitinating complex. Component of the USP12-DMWD-WDR48 deubiquitinating complex. Interacts with PHLPP1. Interacts with RBPJ. Interacts with CBP; this interaction blocks the acetyltransferase activity of CREBBP. Interacts with ITCH; the interaction is more efficient when both USP12 and WDR48/UAF1 are involved and may mediate recruitment of the USP12 deubiquitinating complex to Notch.

Its subcellular location is the nucleus. It is found in the cytoplasm. The protein resides in the cell membrane. The catalysed reaction is Thiol-dependent hydrolysis of ester, thioester, amide, peptide and isopeptide bonds formed by the C-terminal Gly of ubiquitin (a 76-residue protein attached to proteins as an intracellular targeting signal).. Activated by interaction with WDR20, WDR48 and DMWD through different allosteric mechanisms. Functionally, deubiquitinating enzyme that plays various roles in the regulation of the immune response and inflammation. During TCR engagement and activation, translocates into the cytoplasm and deubiquitinates its substrates LAT and TRAT1 and prevents their lysosome-dependent degradation to stabilize the TCR signaling complex at the plasma membrane. Plays an essential role in the selective LPS-induced macrophage response through the activation of NF-kappa-B pathway. In addition, promotes that antiviral immune response through targeting DNA sensor IFI16 to inhibit its proteasome-dependent degradation. Participates in the interferon signaling pathway and antiviral response independently of its deubiquitinase activity by maintaining nuclear phosphorylated STAT1 levels via inhibition of its CREBBP-mediated acetylation and subsequent dephosphorylation. Plays an intrinsic role in promoting the differentiation, activation and proliferation of CD4(+) T-cell by activating the NF-kappa-B signaling pathway through deubiquitinating and stabilizing B-cell lymphoma/leukemia 10/BCL10. In myeloid-derived suppressor cells promotes the activation of the NF-kappa-B via deubiquitination and stabilization of RELA. Regulates the 'Lys-63'-linked polyubiquitin chains of BAX and thereby modulates the mitochondrial apoptotic process. Negative regulator of NOTCH signaling that specifically deubiquitinates non-activated NOTCH receptors to target them for lysosomal degradation; deubiquitination of NOTCH stimulates its transport form late endosomes to lysosomes. Protects neurons against HTT/huntingtin-induced polyglutamine expansion-dependent neurodegeneration through regulation of autophagic flux. This function is independent of deubiquitinase activity or of other components of the USP12-WDR20-WDR48 deubiquitinating complex. In complex with WDR48, acts as a potential tumor suppressor by positively regulating PHLPP1 stability. This Rattus norvegicus (Rat) protein is Ubiquitin carboxyl-terminal hydrolase 12.